The following is a 325-amino-acid chain: MRVENNNVSGQNHDPEQIDLIDLLVQLWRGKMTIIISVIVAIALAIGYLAVAKEKWTSTAIVTQPDVGQIAGYNNAMNVIYGQATPKVSDLQETLIGRFSSAFSALAETLDNQEEPEKLTIEPSVKNQQLPLTVSYVGQTAEGAQMKLAQYIQQVDDKVNQELEKDLKDNIALGRKNLQDSLRTQEVVAQEQKDLRIRQIQEALQYANQAQVTKPQVQQTEDVTQDTLFLLGSEALESMIKHEATRPLVFSPSYYQTRQNLLDIENLKVDDLDIHAYRYVMKPTLPIRRDSPKKAITLILAVLLGGMVGAGIVLGRNALRNYNAK.

The Cytoplasmic portion of the chain corresponds to 1–31; it reads MRVENNNVSGQNHDPEQIDLIDLLVQLWRGK. The chain crosses the membrane as a helical span at residues 32-52; that stretch reads MTIIISVIVAIALAIGYLAVA. The Periplasmic portion of the chain corresponds to 53-294; the sequence is KEKWTSTAIV…LPIRRDSPKK (242 aa). A helical transmembrane segment spans residues 295–315; that stretch reads AITLILAVLLGGMVGAGIVLG. At 316-325 the chain is on the cytoplasmic side; sequence RNALRNYNAK.

The protein belongs to the WzzB/Cld/Rol family.

Its subcellular location is the cell inner membrane. It participates in bacterial outer membrane biogenesis; lipopolysaccharide biosynthesis. In terms of biological role, confers a modal distribution of chain length on the O-antigen component of lipopolysaccharide (LPS). Gives rise to a reduced number of short chain molecules and increases in numbers of longer molecules. The protein is Chain length determinant protein (wzzB) of Shigella dysenteriae.